Consider the following 1204-residue polypeptide: Erythroid differentiation-related factor 1 (1204 aa).

Disordered regions lie at residues 1–30 (MGDAKEAGAEGPPAGAAAREGLSLLSQAES), 220–264 (QPVS…ASSQ), 483–527 (PKKE…SDDS), and 586–613 (KKESDLPAADPSTPIPLKYEDESSRGGP). 3 stretches are compositionally biased toward low complexity: residues 9–30 (AEGPPAGAAAREGLSLLSQAES), 223–241 (SSTTEQQESSSSDQTNDSE), and 253–263 (SSVSEDPSASS). Residues 496-513 (NSDESYSEEEEEMPDSDE) are compositionally biased toward acidic residues. 2 TPR repeats span residues 693-726 (CCLCTNMLSEVLLFLSQYLTLCGDIQLMLAQNAN) and 920-953 (DIHPAVWDSVNWELSTTYFTMATLQQDYAPLSRK).

The protein localises to the nucleus. In terms of biological role, transcription factor involved in erythroid differentiation. Involved in transcriptional activation of the globin gene. This is Erythroid differentiation-related factor 1 (EDRF1) from Pongo abelii (Sumatran orangutan).